A 264-amino-acid chain; its full sequence is Undecaprenyl-diphosphatase (264 aa).

Helical transmembrane passes span 38–58 (RSDFFNIVIQAGAIVAVVLVF), 75–95 (REYVFKLGAAFLVTAVVGLVV), 106–126 (VSPVAWALIIGGIWMLLVEAY), 136–156 (VTWTVAIGVGLAQVVAGVFPG), 181–201 (FVFLVGIPTMFAASAYTFLEM), 217–237 (VAFLAAAVTGFVVVKWLMGYI), and 242–262 (FTAFALYRIALGAALLLWLPS).

It belongs to the UppP family.

The protein resides in the cell inner membrane. The enzyme catalyses di-trans,octa-cis-undecaprenyl diphosphate + H2O = di-trans,octa-cis-undecaprenyl phosphate + phosphate + H(+). Functionally, catalyzes the dephosphorylation of undecaprenyl diphosphate (UPP). Confers resistance to bacitracin. In Stenotrophomonas maltophilia (strain R551-3), this protein is Undecaprenyl-diphosphatase.